Consider the following 283-residue polypeptide: N-terminal Xaa-Pro-Lys N-methyltransferase 2 (283 aa).

S-adenosyl-L-methionine contacts are provided by residues Gly124, Arg129, Asp146, 174–175 (LQ), and Gln190.

Belongs to the methyltransferase superfamily. NTM1 family.

The protein resides in the nucleus. The catalysed reaction is N-terminal L-alanyl-L-prolyl-L-lysyl-[protein] + S-adenosyl-L-methionine = N-terminal N-methyl-L-alanyl-L-prolyl-L-lysyl-[protein] + S-adenosyl-L-homocysteine + H(+). The enzyme catalyses N-terminal L-prolyl-L-prolyl-L-lysyl-[protein] + S-adenosyl-L-methionine = N-terminal N-methyl-L-prolyl-L-prolyl-L-lysyl-[protein] + S-adenosyl-L-homocysteine + H(+). It catalyses the reaction N-terminal L-seryl-L-prolyl-L-lysyl-[protein] + S-adenosyl-L-methionine = N-terminal N-methyl-L-seryl-L-prolyl-L-lysyl-[protein] + S-adenosyl-L-homocysteine + H(+). In terms of biological role, alpha N-methyltransferase that methylates the N-terminus of target proteins containing the N-terminal motif [Ala/Pro/Ser]-Pro-Lys when the initiator Met is cleaved. Specifically catalyzes monomethylation of exposed alpha-amino group of Ala or Ser residue in the [Ala/Ser]-Pro-Lys motif and Pro in the Pro-Pro-Lys motif. Predominantly functions as a mono-methyltransferase but is also able to di-/tri-methylate the GPKRIA peptide and di-methylate the PPKRIA peptide (in vitro). May activate NTMT1 by priming its substrates for trimethylation. In Rattus norvegicus (Rat), this protein is N-terminal Xaa-Pro-Lys N-methyltransferase 2 (Ntmt2).